A 417-amino-acid polypeptide reads, in one-letter code: CinA-like protein (417 aa).

Belongs to the CinA family.

This chain is CinA-like protein, found in Synechococcus sp. (strain RCC307).